A 187-amino-acid chain; its full sequence is Flavin-dependent monooxygenase, reductase subunit HsaB (187 aa).

Residues 32 to 36 (PVGFA), 38 to 39 (QS), 53 to 55 (CPT), 59 to 60 (RS), and 85 to 86 (RF) each bind FAD. 152-155 (FYRG) is an NAD(+) binding site.

This sequence belongs to the non-flavoprotein flavin reductase family. In terms of assembly, hsaAB monooxygenase consists of an oxygenase component HsaA and a reductase component HsaB.

It carries out the reaction a reduced flavin + NAD(+) = an oxidized flavin + NADH + 2 H(+). It participates in lipid metabolism; steroid biosynthesis. Its function is as follows. Catalyzes the reduction of free flavins (FMN or FAD) by NADH. Subsequently, the reduced flavins diffuse to the HsaA oxygenase subunit. The protein is Flavin-dependent monooxygenase, reductase subunit HsaB (hsaB) of Mycobacterium tuberculosis (strain CDC 1551 / Oshkosh).